Reading from the N-terminus, the 207-residue chain is UPF0319 protein VV1_2115 (207 aa).

Residues 1–18 (MLRVLGLAGMLMSFNIHA) form the signal peptide.

Belongs to the UPF0319 family.

The protein is UPF0319 protein VV1_2115 of Vibrio vulnificus (strain CMCP6).